The primary structure comprises 106 residues: UPF0145 protein PP_2873 (106 aa).

This sequence belongs to the UPF0145 family.

In Pseudomonas putida (strain ATCC 47054 / DSM 6125 / CFBP 8728 / NCIMB 11950 / KT2440), this protein is UPF0145 protein PP_2873.